A 338-amino-acid polypeptide reads, in one-letter code: L-asparaginase 1 (338 aa).

The 326-residue stretch at 4 to 329 (KSIYVAYTGG…ETIRKAMSQN (326 aa)) folds into the Asparaginase/glutaminase domain. T14 functions as the O-isoaspartyl threonine intermediate in the catalytic mechanism. Substrate contacts are provided by residues 59-61 (DSS) and 91-92 (TD).

This sequence belongs to the asparaginase 1 family. Homotetramer.

The protein localises to the cytoplasm. It catalyses the reaction L-asparagine + H2O = L-aspartate + NH4(+). This chain is L-asparaginase 1 (ansA), found in Escherichia coli O157:H7.